A 118-amino-acid chain; its full sequence is Holo-[acyl-carrier-protein] synthase (118 aa).

Mg(2+)-binding residues include Asp-8 and Glu-58.

It belongs to the P-Pant transferase superfamily. AcpS family. The cofactor is Mg(2+).

It is found in the cytoplasm. The enzyme catalyses apo-[ACP] + CoA = holo-[ACP] + adenosine 3',5'-bisphosphate + H(+). Transfers the 4'-phosphopantetheine moiety from coenzyme A to a Ser of acyl-carrier-protein. The chain is Holo-[acyl-carrier-protein] synthase from Streptococcus pyogenes serotype M5 (strain Manfredo).